The chain runs to 644 residues: Karyogamy protein KAR9 (644 aa).

S496 carries the post-translational modification Phosphoserine. 2 disordered regions span residues 506-534 and 606-644; these read SVPP…PDSF and PNSQ…TPTY. Basic and acidic residues-rich tracts occupy residues 523-534 and 634-644; these read SRGENEKSPDSF and REGRLDKTPTY.

It is found in the nucleus. Its subcellular location is the cytoplasm. It localises to the cytoskeleton. Involved in karyogamy. Component of a cortical adaptor complex that orients cytoplasmic microtubules. It may be involved in anchoring cytoplasmic microtubules to the cell cortex. The sequence is that of Karyogamy protein KAR9 (KAR9) from Saccharomyces cerevisiae (strain ATCC 204508 / S288c) (Baker's yeast).